The sequence spans 379 residues: RIB43A-like with coiled-coils protein 1 (379 aa).

The interval 1-21 (MYNIKQSTDTKEAAAIEARRN) is disordered. Residues 8 to 21 (TDTKEAAAIEARRN) are compositionally biased toward basic and acidic residues. 2 coiled-coil regions span residues 82-111 (KEEA…GREF) and 216-304 (NANK…QAEK).

The protein belongs to the RIB43A family. As to quaternary structure, microtubule inner protein component of sperm flagellar doublet microtubules.

Its subcellular location is the cytoplasm. It is found in the cytoskeleton. The protein localises to the flagellum axoneme. This is RIB43A-like with coiled-coils protein 1 (RIBC1) from Homo sapiens (Human).